A 194-amino-acid polypeptide reads, in one-letter code: Small COPII coat GTPase SAR1B (194 aa).

Positions 2–4 (FLV) match the STAR; SAR1-N-terminal activation recruitment. Required for the activation and subsequent recruitment to ER membrane motif. The tract at residues 10–14 (MFLWL) is mediates recruitment to ER membranes. 6 residues coordinate GDP: Asn-30, Ala-31, Gly-32, Lys-33, Thr-34, and Thr-35. Asn-30 contacts GTP. 4 residues coordinate GTP: Gly-32, Lys-33, Thr-34, and Thr-35. Asp-70 contacts Mg(2+). The GDP site is built by Lys-131, Asp-133, and Ile-172. GTP contacts are provided by Lys-131, Asp-133, and Ile-172.

It belongs to the small GTPase superfamily. SAR1 family. In terms of assembly, homodimer; upon association with membrane. Part of the coat protein complex II/COPII, composed of SEC23/24 and SEC13/31 heterodimers, that it helps recruit and assemble on endoplasmic reticulum (ER) membranes at ER exit sites.

Its subcellular location is the endoplasmic reticulum membrane. It localises to the golgi apparatus. It is found in the golgi stack membrane. The protein resides in the cytoplasm. The protein localises to the cytosol. The enzyme catalyses GTP + H2O = GDP + phosphate + H(+). Small GTPases activation is mediated by guanine exchange factors (GEF), while inactivation through hydrolysis of the bound GTP is stimulated by GTPase activating proteins (GAP). In terms of biological role, small GTPase that cycles between an active GTP-bound and an inactive GDP-bound state and mainly functions in vesicle-mediated endoplasmic reticulum (ER) to Golgi transport. The active GTP-bound form inserts into the endoplasmic reticulum membrane where it recruits the remainder of the coat protein complex II/COPII. The coat protein complex II assembling and polymerizing on endoplasmic reticulum membrane is responsible for both the sorting of cargos and the deformation and budding of membranes into vesicles destined to the Golgi. This is Small COPII coat GTPase SAR1B (sarB) from Dictyostelium discoideum (Social amoeba).